The sequence spans 143 residues: Histone H2AX (143 aa).

The tract at residues 1–22 (MSGRGKTGGKARAKAKSRSSRA) is disordered. Ser2 carries the post-translational modification N-acetylserine. At Ser2 the chain carries Phosphoserine. Residues Lys6 and Lys10 each carry the N6-acetyllysine modification. Positions 7–19 (TGGKARAKAKSRS) are enriched in basic residues. Lys10 carries the post-translational modification N6-lactoyllysine; alternate. Glycyl lysine isopeptide (Lys-Gly) (interchain with G-Cter in ubiquitin) cross-links involve residues Lys14 and Lys16. Position 37 is an N6-acetyllysine (Lys37). Lys120 is covalently cross-linked (Glycyl lysine isopeptide (Lys-Gly) (interchain with G-Cter in ubiquitin)). A disordered region spans residues 121-143 (TSATVGPKAPSGGKKATQASQEY). Ser122 carries the post-translational modification Phosphoserine. Glycyl lysine isopeptide (Lys-Gly) (interchain with G-Cter in SUMO2) cross-links involve residues Lys128 and Lys135. Residue Ser140 is modified to Phosphoserine; by ATM, ATR and PRKDC. The [ST]-Q motif signature appears at 140 to 141 (SQ). Tyr143 carries the phosphotyrosine; by WSTF modification.

It belongs to the histone H2A family. In terms of assembly, the nucleosome is a histone octamer containing two molecules each of H2A, H2B, H3 and H4 assembled in one H3-H4 heterotetramer and two H2A-H2B heterodimers. The octamer wraps approximately 147 bp of DNA. Interacts with numerous proteins required for DNA damage signaling and repair when phosphorylated on Ser-140. These include MDC1, TP53BP1, BRCA1 and the MRN complex, composed of MRE11, RAD50, and NBN. Interaction with the MRN complex is mediated at least in part by NBN. Also interacts with DHX9/NDHII when phosphorylated on Ser-140 and MCPH1 when phosphorylated at Ser-140 or Tyr-143. Interacts with ARRB2; the interaction is detected in the nucleus upon OR1D2 stimulation. Interacts with WRAP53/TCAB1. Interacts with HDGFL2. Interacts with DNA damage up-regulated protein DDUP. Forms a complex with DDUP and RAD18 following DDUP phosphorylation. As to quaternary structure, (Microbial infection) Interacts with Epstein-Barr virus protein EBNA6. Post-translationally, phosphorylated by VRK1. Phosphorylated on Ser-140 (to form gamma-H2AX or H2AX139ph) in response to DNA double strand breaks (DSBs) generated by exogenous genotoxic agents and by stalled replication forks, and may also occur during meiotic recombination events and immunoglobulin class switching in lymphocytes. Phosphorylation can extend up to several thousand nucleosomes from the actual site of the DSB and may mark the surrounding chromatin for recruitment of proteins required for DNA damage signaling and repair. Widespread phosphorylation may also serve to amplify the damage signal or aid repair of persistent lesions. Phosphorylation of Ser-140 (H2AX139ph) in response to ionizing radiation is mediated by both ATM and PRKDC while defects in DNA replication induce Ser-140 phosphorylation (H2AX139ph) subsequent to activation of ATR and PRKDC. Dephosphorylation of Ser-140 by PP2A is required for DNA DSB repair. In meiosis, Ser-140 phosphorylation (H2AX139ph) may occur at synaptonemal complexes during leptotene as an ATM-dependent response to the formation of programmed DSBs by SPO11. Ser-140 phosphorylation (H2AX139ph) may subsequently occurs at unsynapsed regions of both autosomes and the XY bivalent during zygotene, downstream of ATR and BRCA1 activation. Ser-140 phosphorylation (H2AX139ph) may also be required for transcriptional repression of unsynapsed chromatin and meiotic sex chromosome inactivation (MSCI), whereby the X and Y chromosomes condense in pachytene to form the heterochromatic XY-body. During immunoglobulin class switch recombination in lymphocytes, Ser-140 phosphorylation (H2AX139ph) may occur at sites of DNA-recombination subsequent to activation of the activation-induced cytidine deaminase AICDA. Phosphorylation at Tyr-143 (H2AXY142ph) by BAZ1B/WSTF determines the relative recruitment of either DNA repair or pro-apoptotic factors. Phosphorylation at Tyr-143 (H2AXY142ph) favors the recruitment of APBB1/FE65 and pro-apoptosis factors such as MAPK8/JNK1, triggering apoptosis. In contrast, dephosphorylation of Tyr-143 by EYA proteins (EYA1, EYA2, EYA3 or EYA4) favors the recruitment of MDC1-containing DNA repair complexes to the tail of phosphorylated Ser-140 (H2AX139ph). In terms of processing, monoubiquitination of Lys-120 (H2AXK119ub) by RING1 and RNF2/RING2 complex gives a specific tag for epigenetic transcriptional repression. Following DNA double-strand breaks (DSBs), it is ubiquitinated through 'Lys-63' linkage of ubiquitin moieties by the E2 ligase UBE2N and the E3 ligases RNF8 and RNF168, leading to the recruitment of repair proteins to sites of DNA damage. Ubiquitination at Lys-14 and Lys-16 (H2AK13Ub and H2AK15Ub, respectively) in response to DNA damage is initiated by RNF168 that mediates monoubiquitination at these 2 sites, and 'Lys-63'-linked ubiquitin are then conjugated to monoubiquitin; RNF8 is able to extend 'Lys-63'-linked ubiquitin chains in vitro. H2AK119Ub and ionizing radiation-induced 'Lys-63'-linked ubiquitination (H2AK13Ub and H2AK15Ub) are distinct events. Acetylation at Lys-6 (H2AXK5ac) by KAT5 component of the NuA4 histone acetyltransferase complex promotes NBN/NBS1 assembly at the sites of DNA damage. Acetylation at Lys-37 increases in S and G2 phases. This modification has been proposed to play a role in DNA double-strand break repair.

The protein resides in the nucleus. It localises to the chromosome. Its function is as follows. Variant histone H2A which replaces conventional H2A in a subset of nucleosomes. Nucleosomes wrap and compact DNA into chromatin, limiting DNA accessibility to the cellular machineries which require DNA as a template. Histones thereby play a central role in transcription regulation, DNA repair, DNA replication and chromosomal stability. DNA accessibility is regulated via a complex set of post-translational modifications of histones, also called histone code, and nucleosome remodeling. Required for checkpoint-mediated arrest of cell cycle progression in response to low doses of ionizing radiation and for efficient repair of DNA double strand breaks (DSBs) specifically when modified by C-terminal phosphorylation. This chain is Histone H2AX, found in Homo sapiens (Human).